Reading from the N-terminus, the 234-residue chain is HTH-type transcriptional repressor FabR (234 aa).

The region spanning 29 to 89 is the HTH tetR-type domain; that stretch reads KTRRSLVEAA…TMVDESGLML (61 aa). Positions 52–71 form a DNA-binding region, H-T-H motif; that stretch reads SLREVAREAGIAPTSFYRHF.

Homodimer.

It localises to the cytoplasm. Has been suggested to require either an unsaturated acyl carrier protein or unsaturated acyl-CoA (but not their saturated equivalents) for DNA-binding. Another group suggests that unsaturated thioesters are not essential but act instead to enhance DNA-binding. Its function is as follows. Binds the promoter region of at least fabA and fabB, but probably not yqfA. Represses the transcription of fabA and fabB, involved in unsaturated fatty acid (UFA) biosynthesis. By controlling UFA production, FabR directly influences the physical properties of the membrane bilayer. In Escherichia coli (strain K12), this protein is HTH-type transcriptional repressor FabR.